A 252-amino-acid chain; its full sequence is MDQVYSVAMAYILTLIISPLYSYLIGSLNASIILSLLLKKQDIRHFASKNAGMTNMTRVYGKKLGILTLFLDIVKPIITISLTYIIYKYALNAPFVLSNGFNQAILVYFGGIFTIIGHCYPIFFKFQGGKGVASYGGFLITIDPIVAVIGIITLLIILLITKYMSLSAMITATITCFLVLIPGINYIPYYNEHFVEYLFDLNHVIKGTWYVWLFLLISASILIYRHKTNILSIATKQERKTFLFQPKPKNNI.

Helical transmembrane passes span 6-26 (SVAM…YLIG), 66-86 (ILTL…TYII), 104-124 (AILV…PIFF), 140-160 (ITID…ILLI), 164-184 (MSLS…IPGI), and 204-224 (VIKG…ILIY).

It belongs to the PlsY family. In terms of assembly, probably interacts with PlsX.

It localises to the cell membrane. The enzyme catalyses an acyl phosphate + sn-glycerol 3-phosphate = a 1-acyl-sn-glycero-3-phosphate + phosphate. It functions in the pathway lipid metabolism; phospholipid metabolism. Its function is as follows. Catalyzes the transfer of an acyl group from acyl-phosphate (acyl-PO(4)) to glycerol-3-phosphate (G3P) to form lysophosphatidic acid (LPA). This enzyme utilizes acyl-phosphate as fatty acyl donor, but not acyl-CoA or acyl-ACP. This is Glycerol-3-phosphate acyltransferase from Ureaplasma urealyticum serovar 10 (strain ATCC 33699 / Western).